The following is a 103-amino-acid chain: UPF0145 protein Amet_0532 (103 aa).

This sequence belongs to the UPF0145 family.

This Alkaliphilus metalliredigens (strain QYMF) protein is UPF0145 protein Amet_0532.